The chain runs to 259 residues: Cytochrome c oxidase subunit 3 (259 aa).

The next 7 membrane-spanning stretches (helical) occupy residues 13–33, 36–56, 80–100, 125–145, 160–180, 195–215, and 237–257; these read PWPL…ASWF, HGFL…IQWW, GMIL…WAFF, FSVP…VTWA, ALIL…GEYM, FFVA…FLAI, and AWYW…IYWW.

This sequence belongs to the cytochrome c oxidase subunit 3 family. As to quaternary structure, component of the cytochrome c oxidase (complex IV, CIV), a multisubunit enzyme composed of a catalytic core of 3 subunits and several supernumerary subunits. The complex exists as a monomer or a dimer and forms supercomplexes (SCs) in the inner mitochondrial membrane with ubiquinol-cytochrome c oxidoreductase (cytochrome b-c1 complex, complex III, CIII).

Its subcellular location is the mitochondrion inner membrane. It catalyses the reaction 4 Fe(II)-[cytochrome c] + O2 + 8 H(+)(in) = 4 Fe(III)-[cytochrome c] + 2 H2O + 4 H(+)(out). Its function is as follows. Component of the cytochrome c oxidase, the last enzyme in the mitochondrial electron transport chain which drives oxidative phosphorylation. The respiratory chain contains 3 multisubunit complexes succinate dehydrogenase (complex II, CII), ubiquinol-cytochrome c oxidoreductase (cytochrome b-c1 complex, complex III, CIII) and cytochrome c oxidase (complex IV, CIV), that cooperate to transfer electrons derived from NADH and succinate to molecular oxygen, creating an electrochemical gradient over the inner membrane that drives transmembrane transport and the ATP synthase. Cytochrome c oxidase is the component of the respiratory chain that catalyzes the reduction of oxygen to water. Electrons originating from reduced cytochrome c in the intermembrane space (IMS) are transferred via the dinuclear copper A center (CU(A)) of subunit 2 and heme A of subunit 1 to the active site in subunit 1, a binuclear center (BNC) formed by heme A3 and copper B (CU(B)). The BNC reduces molecular oxygen to 2 water molecules using 4 electrons from cytochrome c in the IMS and 4 protons from the mitochondrial matrix. This is Cytochrome c oxidase subunit 3 (COIII) from Lumbricus terrestris (Common earthworm).